A 564-amino-acid chain; its full sequence is 2-succinyl-5-enolpyruvyl-6-hydroxy-3-cyclohexene-1-carboxylate synthase (564 aa).

It belongs to the TPP enzyme family. MenD subfamily. In terms of assembly, homodimer. The cofactor is Mg(2+). Requires Mn(2+) as cofactor. Thiamine diphosphate serves as cofactor.

The catalysed reaction is isochorismate + 2-oxoglutarate + H(+) = 5-enolpyruvoyl-6-hydroxy-2-succinyl-cyclohex-3-ene-1-carboxylate + CO2. It participates in quinol/quinone metabolism; 1,4-dihydroxy-2-naphthoate biosynthesis; 1,4-dihydroxy-2-naphthoate from chorismate: step 2/7. It functions in the pathway quinol/quinone metabolism; menaquinone biosynthesis. Functionally, catalyzes the thiamine diphosphate-dependent decarboxylation of 2-oxoglutarate and the subsequent addition of the resulting succinic semialdehyde-thiamine pyrophosphate anion to isochorismate to yield 2-succinyl-5-enolpyruvyl-6-hydroxy-3-cyclohexene-1-carboxylate (SEPHCHC). This Photorhabdus laumondii subsp. laumondii (strain DSM 15139 / CIP 105565 / TT01) (Photorhabdus luminescens subsp. laumondii) protein is 2-succinyl-5-enolpyruvyl-6-hydroxy-3-cyclohexene-1-carboxylate synthase.